We begin with the raw amino-acid sequence, 1509 residues long: DNA-directed RNA polymerase subunit beta' (1509 aa).

Residues Cys75, Cys77, Cys90, and Cys93 each contribute to the Zn(2+) site. 3 residues coordinate Mg(2+): Asp474, Asp476, and Asp478. Zn(2+) contacts are provided by Cys804, Cys878, Cys885, and Cys888.

The protein belongs to the RNA polymerase beta' chain family. In terms of assembly, the RNAP catalytic core consists of 2 alpha, 1 beta, 1 beta' and 1 omega subunit. When a sigma factor is associated with the core the holoenzyme is formed, which can initiate transcription. It depends on Mg(2+) as a cofactor. Requires Zn(2+) as cofactor.

The catalysed reaction is RNA(n) + a ribonucleoside 5'-triphosphate = RNA(n+1) + diphosphate. In terms of biological role, DNA-dependent RNA polymerase catalyzes the transcription of DNA into RNA using the four ribonucleoside triphosphates as substrates. This Sulfurovum sp. (strain NBC37-1) protein is DNA-directed RNA polymerase subunit beta'.